The chain runs to 805 residues: Serine/threonine-protein kinase fused (805 aa).

One can recognise a Protein kinase domain in the interval 4 to 254 (YAVSSLVGQG…WTQLLCHPFV (251 aa)). ATP-binding positions include 10–18 (VGQGSFGCV) and lysine 33. Aspartate 125 acts as the Proton acceptor in catalysis. Residues 269 to 289 (KESPFTNPEAKVKSSKQSDPE) are disordered. The segment covering 278–287 (AKVKSSKQSD) has biased composition (basic and acidic residues). A phosphoserine mark is found at serine 422 and serine 429. Residues 447 to 456 (IATQEKHNQE) show a composition bias toward basic and acidic residues. The disordered stretch occupies residues 447 to 496 (IATQEKHNQENKPPAEAISYANSQPPQQQPQQLKHSMHSTNEEKLSSDNT).

The protein belongs to the protein kinase superfamily. Ser/Thr protein kinase family. Expressed in all imaginal disks, higher level in wing disk.

It catalyses the reaction L-seryl-[protein] + ATP = O-phospho-L-seryl-[protein] + ADP + H(+). The catalysed reaction is L-threonyl-[protein] + ATP = O-phospho-L-threonyl-[protein] + ADP + H(+). Probable serine/threonine-protein kinase; maternally required for correct patterning in the posterior part of each embryonic metamere. May be involved in control of cell division during metamorphosis and ovarian development. May interact with costal-2. This chain is Serine/threonine-protein kinase fused (fu), found in Drosophila melanogaster (Fruit fly).